The following is a 261-amino-acid chain: Adenosylcobinamide-GDP ribazoletransferase (261 aa).

The next 7 helical transmembrane spans lie at 9–29 (LELF…VSLP), 41–61 (YFAL…SLAT), 64–84 (FSTN…TGAF), 114–134 (IGTY…LLLT), 141–161 (SLVP…ASLI), 196–216 (ATLL…SLIF), and 235–255 (CLGA…LAFL).

This sequence belongs to the CobS family. Mg(2+) is required as a cofactor.

The protein resides in the cell inner membrane. The enzyme catalyses alpha-ribazole + adenosylcob(III)inamide-GDP = adenosylcob(III)alamin + GMP + H(+). It catalyses the reaction alpha-ribazole 5'-phosphate + adenosylcob(III)inamide-GDP = adenosylcob(III)alamin 5'-phosphate + GMP + H(+). Its pathway is cofactor biosynthesis; adenosylcobalamin biosynthesis; adenosylcobalamin from cob(II)yrinate a,c-diamide: step 7/7. Its function is as follows. Joins adenosylcobinamide-GDP and alpha-ribazole to generate adenosylcobalamin (Ado-cobalamin). Also synthesizes adenosylcobalamin 5'-phosphate from adenosylcobinamide-GDP and alpha-ribazole 5'-phosphate. The sequence is that of Adenosylcobinamide-GDP ribazoletransferase from Vibrio cholerae serotype O1 (strain ATCC 39541 / Classical Ogawa 395 / O395).